We begin with the raw amino-acid sequence, 333 residues long: Atrochrysone carboxyl ACP thioesterase (333 aa).

Zn(2+)-binding residues include His-104, His-106, Asp-108, and His-109. Asp-108 functions as the Proton donor/acceptor in the catalytic mechanism.

Belongs to the metallo-beta-lactamase superfamily. It depends on Zn(2+) as a cofactor.

The catalysed reaction is atrochrysone carboxyl-[ACP] + H2O = atrochrysone carboxylate + holo-[ACP] + H(+). The protein operates within pigment biosynthesis. In terms of biological role, atrochrysone carboxyl ACP thioesterase; part of the gene cluster that mediates the biosynthesis of the bianthraquinone cladofulvin, a conidial pigment not required for virulence but that plays a role in fitness and resistance to environmental stresses including UV light and low-temperature stress. The pathway begins with the synthesis of atrochrysone thioester by the polyketide synthase (PKS) claG. The atrochrysone carboxyl ACP thioesterase claF then breaks the thioester bond and releases the atrochrysone carboxylic acid from claG. This compound is decarboxylated by claH to yield emodin, which is further converted to chrysophanol hydroquinone by the reductase claC and the dehydratase claB. The cytochrome P450 monooxygenase claM then catalyzes the dimerization of nataloe-emodin to cladofulvin. This Passalora fulva (Tomato leaf mold) protein is Atrochrysone carboxyl ACP thioesterase.